A 264-amino-acid polypeptide reads, in one-letter code: Tryptophan synthase alpha chain (264 aa).

Active-site proton acceptor residues include Glu-45 and Asp-56.

The protein belongs to the TrpA family. Tetramer of two alpha and two beta chains.

It catalyses the reaction (1S,2R)-1-C-(indol-3-yl)glycerol 3-phosphate + L-serine = D-glyceraldehyde 3-phosphate + L-tryptophan + H2O. The protein operates within amino-acid biosynthesis; L-tryptophan biosynthesis; L-tryptophan from chorismate: step 5/5. Its function is as follows. The alpha subunit is responsible for the aldol cleavage of indoleglycerol phosphate to indole and glyceraldehyde 3-phosphate. In Leptospira borgpetersenii serovar Hardjo-bovis (strain JB197), this protein is Tryptophan synthase alpha chain.